The sequence spans 218 residues: Ribosomal RNA small subunit methyltransferase J (218 aa).

S-adenosyl-L-methionine contacts are provided by residues 55–56 (RD), 71–72 (ER), and Asp-123.

It belongs to the methyltransferase superfamily. RsmJ family.

It localises to the cytoplasm. It catalyses the reaction guanosine(1516) in 16S rRNA + S-adenosyl-L-methionine = N(2)-methylguanosine(1516) in 16S rRNA + S-adenosyl-L-homocysteine + H(+). Its function is as follows. Specifically methylates the guanosine in position 1516 of 16S rRNA. This is Ribosomal RNA small subunit methyltransferase J from Rhodopseudomonas palustris (strain HaA2).